A 648-amino-acid polypeptide reads, in one-letter code: Threonine--tRNA ligase (648 aa).

The TGS domain maps to 1–63; sequence MSQISLTFPD…AASGRIAINT (63 aa). Positions 247-544 are catalytic; that stretch reads DHRKLGREME…LIENYSGKLP (298 aa). The Zn(2+) site is built by Cys344, His395, and His521.

It belongs to the class-II aminoacyl-tRNA synthetase family. Homodimer. Zn(2+) serves as cofactor.

It is found in the cytoplasm. It catalyses the reaction tRNA(Thr) + L-threonine + ATP = L-threonyl-tRNA(Thr) + AMP + diphosphate + H(+). Catalyzes the attachment of threonine to tRNA(Thr) in a two-step reaction: L-threonine is first activated by ATP to form Thr-AMP and then transferred to the acceptor end of tRNA(Thr). Also edits incorrectly charged L-seryl-tRNA(Thr). The chain is Threonine--tRNA ligase from Paracoccus denitrificans (strain Pd 1222).